The sequence spans 128 residues: Small ribosomal subunit protein uS14m (128 aa).

Belongs to the universal ribosomal protein uS14 family. In terms of assembly, component of the mitochondrial small ribosomal subunit (mt-SSU). Mature mammalian 55S mitochondrial ribosomes consist of a small (28S) and a large (39S) subunit. The 28S small subunit contains a 12S ribosomal RNA (12S mt-rRNA) and 30 different proteins. The 39S large subunit contains a 16S rRNA (16S mt-rRNA), a copy of mitochondrial valine transfer RNA (mt-tRNA(Val)), which plays an integral structural role, and 52 different proteins. Interacts with LIAT1.

It is found in the mitochondrion. The chain is Small ribosomal subunit protein uS14m from Homo sapiens (Human).